The primary structure comprises 307 residues: Fe-S cluster assembly protein dre2 (307 aa).

Disordered stretches follow at residues 1–26 (MTPV…PSTS) and 159–179 (KKKK…VGFV). Over residues 15-26 (AAPPTKTAPSTS) the composition is skewed to low complexity. The interval 23 to 152 (PSTSTRTLLL…EKPAYQEAAV (130 aa)) is N-terminal SAM-like domain. A linker region spans residues 153–197 (PLRLGGKKKKAPAPTEQPPVATGVGFVDGNDELIDEDDLLSDDDL). Residues Cys-207, Cys-219, Cys-222, and Cys-224 each coordinate [2Fe-2S] cluster. The tract at residues 207-224 (CQPEKAKKRRRPCKDCTC) is fe-S binding site A. The [4Fe-4S] cluster site is built by Cys-270, Cys-273, Cys-281, and Cys-284. 2 consecutive short sequence motifs (cx2C motif) follow at residues 270–273 (CNSC) and 281–284 (CSSC). Residues 270 to 284 (CNSCSLGDAFRCSSC) form a fe-S binding site B region.

Belongs to the anamorsin family. As to quaternary structure, monomer. Interacts with tah18. Interacts with mia40. [2Fe-2S] cluster is required as a cofactor. It depends on [4Fe-4S] cluster as a cofactor.

The protein resides in the cytoplasm. It is found in the mitochondrion intermembrane space. In terms of biological role, component of the cytosolic iron-sulfur (Fe-S) protein assembly (CIA) machinery required for the maturation of extramitochondrial Fe-S proteins. Part of an electron transfer chain functioning in an early step of cytosolic Fe-S biogenesis, facilitating the de novo assembly of a [4Fe-4S] cluster on the scaffold complex cfd1-nbp35. Electrons are transferred to dre2 from NADPH via the FAD- and FMN-containing protein tah18. Tah18-dre2 are also required for the assembly of the diferric tyrosyl radical cofactor of ribonucleotide reductase (RNR), probably by providing electrons for reduction during radical cofactor maturation in the catalytic small subunit rnr2. In Aspergillus terreus (strain NIH 2624 / FGSC A1156), this protein is Fe-S cluster assembly protein dre2.